The primary structure comprises 158 residues: Large ribosomal subunit protein uL11 (158 aa).

The protein belongs to the universal ribosomal protein uL11 family. Part of the ribosomal stalk of the 50S ribosomal subunit. Interacts with L10 and the large rRNA to form the base of the stalk. L10 forms an elongated spine to which L12 dimers bind in a sequential fashion forming a multimeric L10(L12)X complex.

In terms of biological role, forms part of the ribosomal stalk which helps the ribosome interact with GTP-bound translation factors. The sequence is that of Large ribosomal subunit protein uL11 from Methanocella arvoryzae (strain DSM 22066 / NBRC 105507 / MRE50).